Consider the following 457-residue polypeptide: MFSRPFVTPVTIDLQVKSITAGNMWEGLGFYKPANSKSNQMICSKGFRLNCSIDREMIVITKALVDSIAERSSETYEPGLSTVVMNFENEFDPYEAVSTPIYQTATFKQPSATVNGPYDYTRSGNPTRDALERLLAKLDKADRAFCFGSGMAALSAVSQLFENGDEIIAGDDIYGGSDRLLSSVIPRTGVVVKRVNTSDLEEVASAFGPATKLVWLESPTNPRLQISDIGKIAEMAHARGVLVLVDNSIMSPVLCQPLELGADIVMHSATKFIGGHSYIMAGVIAVKGERLAKEMYFLQNAVGSGLAPFDCWLCLQGIKTMELRVEKQQKSAQKIAEFLAFHPRVKKVNYAGLPGHPGRDLHYSQAKGAGSVLSFLTGSLALSKHVVESTKYFSITVSFGSVKSLISMPCFMSHASIPVAVREARGLTEDLVRISVGIENVDDLIADLDQALSSGPL.

Residues 1–51 (MFSRPFVTPVTIDLQVKSITAGNMWEGLGFYKPANSKSNQMICSKGFRLNC) constitute a chloroplast transit peptide. Residues tyrosine 120, arginine 122, glycine 150, methionine 151, serine 268, and threonine 270 each coordinate pyridoxal 5'-phosphate. Lysine 271 carries the post-translational modification N6-(pyridoxal phosphate)lysine.

It belongs to the trans-sulfuration enzymes family. Forms homodimers. May form homotetramers from two homodimers. Requires pyridoxal 5'-phosphate as cofactor.

The protein resides in the plastid. Its subcellular location is the chloroplast. The catalysed reaction is L,L-cystathionine + H2O = L-homocysteine + pyruvate + NH4(+). The enzyme catalyses an S-substituted L-cysteine + H2O = a thiol + pyruvate + NH4(+). Its function is as follows. Catalyzes the degradation of cystathionine. The polypeptide is Cystathionine beta-lyase, chloroplastic (Mimosa pudica (Sensitive plant)).